The primary structure comprises 367 residues: Putative 12-oxophytodienoate reductase 11 (367 aa).

FMN contacts are provided by residues 26-28 (PLT), alanine 59, and glutamine 101. 178–181 (HGAH) contributes to the substrate binding site. The Proton donor role is filled by tyrosine 183. Arginine 230 contributes to the FMN binding site. Arginine 270 is a substrate binding site. FMN is bound by residues glycine 300 and 321 to 322 (GR).

Belongs to the NADH:flavin oxidoreductase/NADH oxidase family. It depends on FMN as a cofactor.

In terms of biological role, putative oxophytodienoate reductase that may be involved in the biosynthesis or metabolism of oxylipin signaling molecules. The protein is Putative 12-oxophytodienoate reductase 11 (OPR11) of Oryza sativa subsp. japonica (Rice).